The sequence spans 89 residues: Repressor protein (89 aa).

A DNA-binding region (H-T-H motif) is located at residues 29 to 52; it reads SGDIARNTGYSRRRISDRCTVLVD.

Its function is as follows. Transcriptional repressor expressed under lysogenic conditions, which specifically binds the host DNA site 'RRGAAG'. The binding occurs cooperatively, probably as 2 copies of a dimer. Possibly prevents RNA polymerase access to the promoters for lytic cell cycle transcription. The protein is Repressor protein (T6) of Halobacterium salinarum (Halobacterium halobium).